Reading from the N-terminus, the 130-residue chain is Histone H2B.1 (130 aa).

Residues 1–19 (MAPKAEKKPASKAPAEKKP) show a composition bias toward basic and acidic residues. Positions 1 to 39 (MAPKAEKKPASKAPAEKKPAAKKTASATGTKKRSKTRKE) are disordered. 2 positions are modified to N6-acetyllysine; alternate: lysine 7 and lysine 8. Glycyl lysine isopeptide (Lys-Gly) (interchain with G-Cter in SUMO); alternate cross-links involve residues lysine 7 and lysine 8. Phosphoserine is present on serine 11. Lysine 12 is modified (N6-acetyllysine). At lysine 17 the chain carries N6-acetyllysine; alternate. Lysine 17 is covalently cross-linked (Glycyl lysine isopeptide (Lys-Gly) (interchain with G-Cter in SUMO); alternate). Lysine 18 is covalently cross-linked (Glycyl lysine isopeptide (Lys-Gly) (interchain with G-Cter in SUMO)). Lysine 124 is covalently cross-linked (Glycyl lysine isopeptide (Lys-Gly) (interchain with G-Cter in ubiquitin)).

It belongs to the histone H2B family. The nucleosome is a histone octamer containing two molecules each of H2A, H2B, H3 and H4 assembled in one H3-H4 heterotetramer and two H2A-H2B heterodimers. The octamer wraps approximately 147 bp of DNA. In terms of processing, monoubiquitinated by the UBC2-BRE1 complex to form H2BK123ub1. H2BK123ub1 gives a specific tag for epigenetic transcriptional activation and is also prerequisite for H3K4me and H3K79me formation. H2BK123ub1 also modulates the formation of double-strand breaks during meiosis and is a prerequisite for DNA-damage checkpoint activation. Post-translationally, phosphorylated by STE20 to form H2BS10ph during progression through meiotic prophase. May be correlated with chromosome condensation. Acetylated by GCN5 to form H2BK11ac and H2BK16ac. H2BK16ac can also be formed by ESA1. Acetylation of N-terminal lysines and particularly formation of H2BK11acK16ac has a positive effect on transcription. In terms of processing, sumoylation to form H2BK6su or H2BK7su, and probably also H2BK16su or H2BK17su, occurs preferentially near the telomeres and represses gene transcription.

It is found in the nucleus. Its subcellular location is the chromosome. Functionally, core component of nucleosome. Nucleosomes wrap and compact DNA into chromatin, limiting DNA accessibility to the cellular machineries which require DNA as a template. Histones thereby play a central role in transcription regulation, DNA repair, DNA replication and chromosomal stability. DNA accessibility is regulated via a complex set of post-translational modifications of histones, also called histone code, and nucleosome remodeling. The sequence is that of Histone H2B.1 (HTB1) from Debaryomyces hansenii (strain ATCC 36239 / CBS 767 / BCRC 21394 / JCM 1990 / NBRC 0083 / IGC 2968) (Yeast).